We begin with the raw amino-acid sequence, 687 residues long: Outer dynein arm-docking complex subunit 1 (687 aa).

Coiled coils occupy residues 100–193 (QVRV…YLNV), 222–267 (REEA…LKLK), and 341–421 (INEQ…LFTR). The segment at 126–147 (SRNSAHSKNARSPGCVQHDKVK) is disordered. Disordered regions lie at residues 363-388 (VSGR…QRVD), 487-511 (FPKK…AKDD), and 540-687 (ESTP…QSNY). The span at 366–388 (RRSEEDRRAQQEQQRAELQQRVD) shows a compositional bias: basic and acidic residues. The segment covering 544 to 556 (SMTSSTQKVSSSS) has biased composition (low complexity). Polar residues-rich tracts occupy residues 557-611 (RLVT…SSRG) and 620-629 (RSPNSSSYLG). Residues 660-680 (SPGPASSPGPASSTGQASSTS) are compositionally biased toward low complexity.

It belongs to the ODA1/DCC2 family. As to quaternary structure, component of the outer dynein arm-docking complex along with ODAD2, ODAD3, ODAD4 and CLXN. Interacts with ODAD3. Interacts with ODAD4; this interaction may facilitate the recruitment and/or attachment of outer dynein arm docking complex proteins, including ODAD1, ODAD3, and ODAD4 to ciliary axonemes. Interacts with DNAH9. Interacts with MNS1. Interacts with PIERCE1 and PIERCE2; the interactions link the outer dynein arms docking complex (ODA-DC) to the internal microtubule inner proteins (MIP) in cilium axoneme. In terms of tissue distribution, expressed in trachea multiciliated cells.

The protein resides in the cytoplasm. It localises to the cytoskeleton. It is found in the cilium axoneme. Functionally, component of the outer dynein arm-docking complex (ODA-DC) that mediates outer dynein arms (ODA) binding onto the doublet microtubule. Involved in mediating assembly of both ODAs and their axonemal docking complex onto ciliary microtubules. This chain is Outer dynein arm-docking complex subunit 1 (ODAD1), found in Bos taurus (Bovine).